The following is a 339-amino-acid chain: Probable scoulerine-9-O-methyltransferase OMT3B (339 aa).

S-adenosyl-L-methionine is bound at residue Met161. Asp164 provides a ligand contact to substrate. Residues Thr165, Gly191, Asp214, 228-229 (DV), and Lys242 contribute to the S-adenosyl-L-methionine site. A substrate-binding site is contributed by 243–247 (SILHE). His246 functions as the Proton acceptor in the catalytic mechanism.

Belongs to the class I-like SAM-binding methyltransferase superfamily. Cation-independent O-methyltransferase family. COMT subfamily.

It carries out the reaction (S)-scoulerine + S-adenosyl-L-methionine = (S)-tetrahydrocolumbamine + S-adenosyl-L-homocysteine + H(+). It participates in alkaloid biosynthesis. In terms of biological role, methyltransferase involved in the biosynthesis of the benzylisoquinoline alkaloid noscapine. Catalyzes the conversion of (S)-scoulerine to (S)-tetrahydrocolumbamine. The sequence is that of Probable scoulerine-9-O-methyltransferase OMT3B from Papaver somniferum (Opium poppy).